A 130-amino-acid polypeptide reads, in one-letter code: Small ribosomal subunit protein uS9 (130 aa).

Positions 98–130 are disordered; the sequence is LKRAGFLTRDARKKERKKYGQPGARKRFQYSKR. Positions 111–130 are enriched in basic residues; it reads KERKKYGQPGARKRFQYSKR.

The protein belongs to the universal ribosomal protein uS9 family.

This is Small ribosomal subunit protein uS9 from Sorangium cellulosum (strain So ce56) (Polyangium cellulosum (strain So ce56)).